Here is a 402-residue protein sequence, read N- to C-terminus: Dihydrolipoyllysine-residue acetyltransferase component of pyruvate dehydrogenase complex (402 aa).

Residues 2–77 (ANEFKFTDVG…HIGQVMAVID (76 aa)) enclose the Lipoyl-binding domain. Lysine 43 is modified (N6-lipoyllysine). Disordered stretches follow at residues 82–110 (AAAPAAPQPVSAPAPAPTPTFTPTPAPVT) and 143–172 (PQPTPAPVVQPTSAPTPTPAPASAAAPSGE). 2 stretches are compositionally biased toward pro residues: residues 87–107 (APQPVSAPAPAPTPTFTPTPA) and 143–162 (PQPTPAPVVQPTSAPTPTPA). Histidine 374 is an active-site residue.

Belongs to the 2-oxoacid dehydrogenase family. As to quaternary structure, forms a 24-polypeptide structural core with octahedral symmetry. It depends on (R)-lipoate as a cofactor.

It carries out the reaction N(6)-[(R)-dihydrolipoyl]-L-lysyl-[protein] + acetyl-CoA = N(6)-[(R)-S(8)-acetyldihydrolipoyl]-L-lysyl-[protein] + CoA. In terms of biological role, the pyruvate dehydrogenase complex catalyzes the overall conversion of pyruvate to acetyl-CoA and CO(2). It contains multiple copies of three enzymatic components: pyruvate dehydrogenase (E1), dihydrolipoamide acetyltransferase (E2) and lipoamide dehydrogenase (E3). The chain is Dihydrolipoyllysine-residue acetyltransferase component of pyruvate dehydrogenase complex (pdhC) from Mycoplasma pneumoniae (strain ATCC 29342 / M129 / Subtype 1) (Mycoplasmoides pneumoniae).